Consider the following 428-residue polypeptide: Adenylosuccinate synthetase (428 aa).

GTP contacts are provided by residues 12–18 (GDEGKGK) and 40–42 (GHT). D13 acts as the Proton acceptor in catalysis. Positions 13 and 40 each coordinate Mg(2+). IMP-binding positions include 13 to 16 (DEGK), 38 to 41 (NAGH), T128, R142, Q223, T238, and R302. The active-site Proton donor is H41. 298–304 (TTTGRPR) contacts substrate. GTP contacts are provided by residues R304, 330–332 (SID), and 412–414 (SVG).

This sequence belongs to the adenylosuccinate synthetase family. As to quaternary structure, homodimer. Mg(2+) is required as a cofactor.

The protein resides in the cytoplasm. The catalysed reaction is IMP + L-aspartate + GTP = N(6)-(1,2-dicarboxyethyl)-AMP + GDP + phosphate + 2 H(+). Its pathway is purine metabolism; AMP biosynthesis via de novo pathway; AMP from IMP: step 1/2. Plays an important role in the de novo pathway of purine nucleotide biosynthesis. Catalyzes the first committed step in the biosynthesis of AMP from IMP. The protein is Adenylosuccinate synthetase of Geobacillus kaustophilus (strain HTA426).